The primary structure comprises 314 residues: Acetylglutamate kinase (314 aa).

Substrate contacts are provided by residues 76-77, R98, and N199; that span reads GG.

The protein belongs to the acetylglutamate kinase family. ArgB subfamily.

The protein localises to the cytoplasm. It catalyses the reaction N-acetyl-L-glutamate + ATP = N-acetyl-L-glutamyl 5-phosphate + ADP. It functions in the pathway amino-acid biosynthesis; L-arginine biosynthesis; N(2)-acetyl-L-ornithine from L-glutamate: step 2/4. In terms of biological role, catalyzes the ATP-dependent phosphorylation of N-acetyl-L-glutamate. The polypeptide is Acetylglutamate kinase (Bifidobacterium longum (strain DJO10A)).